The following is a 246-amino-acid chain: 1-(5-phosphoribosyl)-5-[(5-phosphoribosylamino)methylideneamino] imidazole-4-carboxamide isomerase (246 aa).

Catalysis depends on Asp8, which acts as the Proton acceptor. Asp131 serves as the catalytic Proton donor.

The protein belongs to the HisA/HisF family.

The protein resides in the cytoplasm. The catalysed reaction is 1-(5-phospho-beta-D-ribosyl)-5-[(5-phospho-beta-D-ribosylamino)methylideneamino]imidazole-4-carboxamide = 5-[(5-phospho-1-deoxy-D-ribulos-1-ylimino)methylamino]-1-(5-phospho-beta-D-ribosyl)imidazole-4-carboxamide. It functions in the pathway amino-acid biosynthesis; L-histidine biosynthesis; L-histidine from 5-phospho-alpha-D-ribose 1-diphosphate: step 4/9. The chain is 1-(5-phosphoribosyl)-5-[(5-phosphoribosylamino)methylideneamino] imidazole-4-carboxamide isomerase from Polaromonas naphthalenivorans (strain CJ2).